A 242-amino-acid chain; its full sequence is N-alpha-acetyltransferase 60 (242 aa).

At 1 to 192 the chain is on the cytoplasmic side; the sequence is MSEEERPAAL…GGHPPWTVMD (192 aa). One can recognise an N-acetyltransferase domain in the interval 13–182; that stretch reads TILRFLCHDD…DAYTYVLYLN (170 aa). Tyr-38 lines the substrate pocket. The active site involves Tyr-97. Residue Leu-99 participates in substrate binding. Acetyl-CoA-binding positions include 101–103 and 109–114; these read LGV and KQGIGS. The active site involves His-138. Acetyl-CoA contacts are provided by residues Asn-143 and 150-153; that span reads YENR. The interval 162–173 is required for homodimerization; it reads PYYYSIRGVLQD. Tyr-165 provides a ligand contact to substrate. Positions 193-236 form an intramembrane region, helical; it reads YLQHLGSALAGFSPCTLPQRIYRQAHTLLRSLLPWSSISAKSGI. Residues 237–242 are Cytoplasmic-facing; the sequence is EYSRTM.

This sequence belongs to the acetyltransferase family. NAA60 subfamily. In terms of assembly, monomer and homodimer; monomer in presence of substrate and homodimer in its absence.

The protein localises to the golgi apparatus membrane. It carries out the reaction N-terminal L-methionyl-[transmembrane protein] + acetyl-CoA = N-terminal N(alpha)-acetyl-L-methionyl-[transmembrane protein] + CoA + H(+). It catalyses the reaction L-lysyl-[protein] + acetyl-CoA = N(6)-acetyl-L-lysyl-[protein] + CoA + H(+). Its function is as follows. N-alpha-acetyltransferase that specifically mediates the acetylation of N-terminal residues of the transmembrane proteins, with a strong preference for N-termini facing the cytosol. Displays N-terminal acetyltransferase activity towards a range of N-terminal sequences including those starting with Met-Lys, Met-Val, Met-Ala and Met-Met. Required for normal chromosomal segregation during anaphase. May also show histone acetyltransferase activity; such results are however unclear in vivo and would require additional experimental evidences. The protein is N-alpha-acetyltransferase 60 (naa60) of Xenopus tropicalis (Western clawed frog).